Here is a 197-residue protein sequence, read N- to C-terminus: Protein GrpE (197 aa).

The segment at 1–39 (MSSKEQKTPEGQAPEEIIMDQHEEIEAVEPEASAEQVDP) is disordered.

It belongs to the GrpE family. Homodimer.

The protein localises to the cytoplasm. In terms of biological role, participates actively in the response to hyperosmotic and heat shock by preventing the aggregation of stress-denatured proteins, in association with DnaK and GrpE. It is the nucleotide exchange factor for DnaK and may function as a thermosensor. Unfolded proteins bind initially to DnaJ; upon interaction with the DnaJ-bound protein, DnaK hydrolyzes its bound ATP, resulting in the formation of a stable complex. GrpE releases ADP from DnaK; ATP binding to DnaK triggers the release of the substrate protein, thus completing the reaction cycle. Several rounds of ATP-dependent interactions between DnaJ, DnaK and GrpE are required for fully efficient folding. This is Protein GrpE from Escherichia coli O45:K1 (strain S88 / ExPEC).